A 457-amino-acid polypeptide reads, in one-letter code: ATP synthase subunit beta (457 aa).

147–154 (GGAGVGKT) lines the ATP pocket.

It belongs to the ATPase alpha/beta chains family. As to quaternary structure, F-type ATPases have 2 components, CF(1) - the catalytic core - and CF(0) - the membrane proton channel. CF(1) has five subunits: alpha(3), beta(3), gamma(1), delta(1), epsilon(1). CF(0) has three main subunits: a(1), b(2) and c(9-12). The alpha and beta chains form an alternating ring which encloses part of the gamma chain. CF(1) is attached to CF(0) by a central stalk formed by the gamma and epsilon chains, while a peripheral stalk is formed by the delta and b chains.

Its subcellular location is the cell inner membrane. The enzyme catalyses ATP + H2O + 4 H(+)(in) = ADP + phosphate + 5 H(+)(out). Produces ATP from ADP in the presence of a proton gradient across the membrane. The catalytic sites are hosted primarily by the beta subunits. The sequence is that of ATP synthase subunit beta from Actinobacillus pleuropneumoniae serotype 3 (strain JL03).